The following is a 157-amino-acid chain: ATP synthase subunit b (157 aa).

A helical membrane pass occupies residues 7–27 (LIAQLVVFFILAWFTMKFVWP).

The protein belongs to the ATPase B chain family. In terms of assembly, F-type ATPases have 2 components, F(1) - the catalytic core - and F(0) - the membrane proton channel. F(1) has five subunits: alpha(3), beta(3), gamma(1), delta(1), epsilon(1). F(0) has three main subunits: a(1), b(2) and c(10-14). The alpha and beta chains form an alternating ring which encloses part of the gamma chain. F(1) is attached to F(0) by a central stalk formed by the gamma and epsilon chains, while a peripheral stalk is formed by the delta and b chains.

The protein resides in the cell inner membrane. Its function is as follows. F(1)F(0) ATP synthase produces ATP from ADP in the presence of a proton or sodium gradient. F-type ATPases consist of two structural domains, F(1) containing the extramembraneous catalytic core and F(0) containing the membrane proton channel, linked together by a central stalk and a peripheral stalk. During catalysis, ATP synthesis in the catalytic domain of F(1) is coupled via a rotary mechanism of the central stalk subunits to proton translocation. Functionally, component of the F(0) channel, it forms part of the peripheral stalk, linking F(1) to F(0). This Azoarcus sp. (strain BH72) protein is ATP synthase subunit b.